The following is a 527-amino-acid chain: Tyrosine-protein kinase TXK (527 aa).

A disordered region spans residues 35 to 79 (DEELPEKYTQRRRPWLSQLSNKKQSNTGRVQPSKRKPLPPLPPSE). Residues 51 to 64 (SQLSNKKQSNTGRV) show a composition bias toward polar residues. Residues 68 to 73 (KRKPLP) carry the Nuclear localization signal motif. The region spanning 82–142 (EEKIQVKALY…PSNYVTENKI (61 aa)) is the SH3 domain. Position 91 is a phosphotyrosine; by autocatalysis (tyrosine 91). The SH2 domain maps to 150–246 (WYHRNITRNQ…GLMTRLRYPV (97 aa)). The Protein kinase domain maps to 271-527 (LAFIKEIGSG…RAVTEIAETW (257 aa)). Residues 277–285 (IGSGQFGVV) and lysine 299 contribute to the ATP site. Aspartate 390 (proton acceptor) is an active-site residue. Phosphotyrosine; by FYN and autocatalysis is present on tyrosine 420.

The protein belongs to the protein kinase superfamily. Tyr protein kinase family. TEC subfamily. Interacts with PARP1 and EEF1A1. Interacts with SH2D2A. Interacts with FYN. Post-translationally, phosphorylated at Tyr-420 by FYN. Autophosphorylation at Tyr-91 is critical for the activation of TXK, leading to the up-regulation of IFN-gamma gene transcription. The cysteine string at the N-terminus is palmitoylated and required for the proper subcellular location. Expressed in T-cells and some myeloid cell lines. Expressed in Th1/Th0 cells with IFN-gamma-producing potential.

The protein resides in the cytoplasm. It localises to the nucleus. The protein localises to the cell membrane. The catalysed reaction is L-tyrosyl-[protein] + ATP = O-phospho-L-tyrosyl-[protein] + ADP + H(+). With respect to regulation, activated by phosphorylation by FYN. Its function is as follows. Non-receptor tyrosine kinase that plays a redundant role with ITK in regulation of the adaptive immune response. Regulates the development, function and differentiation of conventional T-cells and nonconventional NKT-cells. When antigen presenting cells (APC) activate T-cell receptor (TCR), a series of phosphorylation leads to the recruitment of TXK to the cell membrane, where it is phosphorylated at Tyr-420. Phosphorylation leads to TXK full activation. Also contributes to signaling from many receptors and participates in multiple downstream pathways, including regulation of the actin cytoskeleton. Like ITK, can phosphorylate PLCG1, leading to its localization in lipid rafts and activation, followed by subsequent cleavage of its substrates. In turn, the endoplasmic reticulum releases calcium in the cytoplasm and the nuclear activator of activated T-cells (NFAT) translocates into the nucleus to perform its transcriptional duty. Plays a role in the positive regulation of IFNG transcription in T-helper 1 cells as part of an IFNG promoter-binding complex with PARP1 and EEF1A1. Within the complex, phosphorylates both PARP1 and EEF1A1. Also phosphorylates key sites in LCP2 leading to the up-regulation of Th1 preferred cytokine IL-2. Phosphorylates 'Tyr-201' of CTLA4 which leads to the association of PI-3 kinase with the CTLA4 receptor. This Homo sapiens (Human) protein is Tyrosine-protein kinase TXK (TXK).